Here is a 143-residue protein sequence, read N- to C-terminus: Lysozyme C (143 aa).

The first 15 residues, 1-15 (MKIPVFLLLLALANA), serve as a signal peptide directing secretion. The C-type lysozyme domain maps to 16 to 143 (KVFQRCEWAR…LSAYIAGCGL (128 aa)). 4 cysteine pairs are disulfide-bonded: Cys-21–Cys-141, Cys-45–Cys-129, Cys-79–Cys-94, and Cys-90–Cys-108. Catalysis depends on residues Glu-50 and Asp-67.

Belongs to the glycosyl hydrolase 22 family. In terms of assembly, monomer.

The protein resides in the secreted. The catalysed reaction is Hydrolysis of (1-&gt;4)-beta-linkages between N-acetylmuramic acid and N-acetyl-D-glucosamine residues in a peptidoglycan and between N-acetyl-D-glucosamine residues in chitodextrins.. Its function is as follows. Lysozymes have primarily a bacteriolytic function; those in tissues and body fluids are associated with the monocyte-macrophage system and enhance the activity of immunoagents. The sequence is that of Lysozyme C from Takifugu rubripes (Japanese pufferfish).